The sequence spans 134 residues: Phosphomevalonate dehydratase small subunit (134 aa).

The active-site Proton acceptor is Ser62.

The protein belongs to the AcnX type II small subunit family. Heterodimer composed of a large subunit (PMDh-L) and a small subunit (PMDh-S).

The enzyme catalyses (R)-5-phosphomevalonate = (2E)-3-methyl-5-phosphooxypent-2-enoate + H2O. The protein operates within isoprenoid biosynthesis; isopentenyl diphosphate biosynthesis via mevalonate pathway. In terms of biological role, component of a hydro-lyase that catalyzes the dehydration of mevalonate 5-phosphate (MVA5P) to form trans-anhydromevalonate 5-phosphate (tAHMP). Involved in the archaeal mevalonate (MVA) pathway, which provides fundamental precursors for isoprenoid biosynthesis, such as isopentenyl diphosphate (IPP) and dimethylallyl diphosphate (DMAPP). This is Phosphomevalonate dehydratase small subunit from Pyrococcus horikoshii (strain ATCC 700860 / DSM 12428 / JCM 9974 / NBRC 100139 / OT-3).